A 343-amino-acid chain; its full sequence is Mitotic checkpoint protein bub-3 (343 aa).

WD repeat units follow at residues 21–62, 67–105, 107–146, 150–187, 192–232, 249–288, and 291–331; these read PPFV…DISE, THGK…GTQL, SHAL…NGAI, NVSS…EPLQ, PLKY…EMMK, ELIH…RIIQ, and KFET…NSIT. The tract at residues 322–343 is disordered; that stretch reads PSPLPNNSITIRHITDPESRPK. Residues 334–343 show a composition bias toward basic and acidic residues; the sequence is HITDPESRPK.

Belongs to the WD repeat BUB3 family. As to quaternary structure, may interact with bub-1; for localization at the kinetochore and the onset of anaphase.

The protein localises to the chromosome. It localises to the centromere. Its subcellular location is the kinetochore. The protein resides in the nucleus. Its function is as follows. Has a dual function in spindle-assembly checkpoint signaling and in promoting the establishment of correct kinetochore-microtubule (K-MT) attachments. Promotes the formation of stable end-on bipolar attachments of chromosomes. Necessary for expression and kinetochore localization of bub-1. Plays a role in synapsis checkpoint signaling inducing apoptosis in response to unsynapsed chromosomes and thus controlling chromosomal segregation during oocyte meiosis. The polypeptide is Mitotic checkpoint protein bub-3 (Caenorhabditis elegans).